The following is a 388-amino-acid chain: Succinate--CoA ligase [ADP-forming] subunit beta (388 aa).

The region spanning 9-245 (KELLKSYGLP…KSQENERELK (237 aa)) is the ATP-grasp domain. ATP-binding positions include K46, 53 to 55 (GRG), E100, Y103, and E108. Residues N200 and D214 each coordinate Mg(2+). Substrate is bound by residues N265 and 322-324 (GIV).

Belongs to the succinate/malate CoA ligase beta subunit family. In terms of assembly, heterotetramer of two alpha and two beta subunits. Mg(2+) is required as a cofactor.

It carries out the reaction succinate + ATP + CoA = succinyl-CoA + ADP + phosphate. The catalysed reaction is GTP + succinate + CoA = succinyl-CoA + GDP + phosphate. It functions in the pathway carbohydrate metabolism; tricarboxylic acid cycle; succinate from succinyl-CoA (ligase route): step 1/1. Succinyl-CoA synthetase functions in the citric acid cycle (TCA), coupling the hydrolysis of succinyl-CoA to the synthesis of either ATP or GTP and thus represents the only step of substrate-level phosphorylation in the TCA. The beta subunit provides nucleotide specificity of the enzyme and binds the substrate succinate, while the binding sites for coenzyme A and phosphate are found in the alpha subunit. The protein is Succinate--CoA ligase [ADP-forming] subunit beta of Psychrobacter arcticus (strain DSM 17307 / VKM B-2377 / 273-4).